A 103-amino-acid chain; its full sequence is Small ribosomal subunit protein uS10 (103 aa).

The protein belongs to the universal ribosomal protein uS10 family. In terms of assembly, part of the 30S ribosomal subunit.

Its function is as follows. Involved in the binding of tRNA to the ribosomes. The sequence is that of Small ribosomal subunit protein uS10 from Jannaschia sp. (strain CCS1).